The following is a 315-amino-acid chain: Type II restriction enzyme SalI (315 aa).

The catalysed reaction is Endonucleolytic cleavage of DNA to give specific double-stranded fragments with terminal 5'-phosphates.. Functionally, a P subtype restriction enzyme that recognizes the double-stranded sequence 5'-GTCGAC-3' and cleaves after G-1. The sequence is that of Type II restriction enzyme SalI from Streptomyces albus G.